Consider the following 426-residue polypeptide: Glutamyl-tRNA reductase (426 aa).

Residues 49-52 (TCNR), Ser109, 114-116 (EGQ), and Gln120 each bind substrate. Cys50 functions as the Nucleophile in the catalytic mechanism. NADP(+) is bound at residue 189–194 (GAGETG).

The protein belongs to the glutamyl-tRNA reductase family. As to quaternary structure, homodimer.

The enzyme catalyses (S)-4-amino-5-oxopentanoate + tRNA(Glu) + NADP(+) = L-glutamyl-tRNA(Glu) + NADPH + H(+). The protein operates within porphyrin-containing compound metabolism; protoporphyrin-IX biosynthesis; 5-aminolevulinate from L-glutamyl-tRNA(Glu): step 1/2. Its pathway is porphyrin-containing compound metabolism; chlorophyll biosynthesis. Catalyzes the NADPH-dependent reduction of glutamyl-tRNA(Glu) to glutamate 1-semialdehyde (GSA). This is Glutamyl-tRNA reductase from Chlorobium phaeobacteroides (strain BS1).